Here is a 96-residue protein sequence, read N- to C-terminus: Glutamyl-tRNA(Gln) amidotransferase subunit C (96 aa).

Belongs to the GatC family. Heterotrimer of A, B and C subunits.

It carries out the reaction L-glutamyl-tRNA(Gln) + L-glutamine + ATP + H2O = L-glutaminyl-tRNA(Gln) + L-glutamate + ADP + phosphate + H(+). It catalyses the reaction L-aspartyl-tRNA(Asn) + L-glutamine + ATP + H2O = L-asparaginyl-tRNA(Asn) + L-glutamate + ADP + phosphate + 2 H(+). In terms of biological role, allows the formation of correctly charged Asn-tRNA(Asn) or Gln-tRNA(Gln) through the transamidation of misacylated Asp-tRNA(Asn) or Glu-tRNA(Gln) in organisms which lack either or both of asparaginyl-tRNA or glutaminyl-tRNA synthetases. The reaction takes place in the presence of glutamine and ATP through an activated phospho-Asp-tRNA(Asn) or phospho-Glu-tRNA(Gln). This is Glutamyl-tRNA(Gln) amidotransferase subunit C from Deinococcus radiodurans (strain ATCC 13939 / DSM 20539 / JCM 16871 / CCUG 27074 / LMG 4051 / NBRC 15346 / NCIMB 9279 / VKM B-1422 / R1).